The primary structure comprises 176 residues: Ribosome maturation factor RimM (176 aa).

The PRC barrel domain maps to 97 to 176; the sequence is DNDFYHRDLI…QIVVDWDPDF (80 aa).

This sequence belongs to the RimM family. Binds ribosomal protein uS19.

Its subcellular location is the cytoplasm. In terms of biological role, an accessory protein needed during the final step in the assembly of 30S ribosomal subunit, possibly for assembly of the head region. Essential for efficient processing of 16S rRNA. May be needed both before and after RbfA during the maturation of 16S rRNA. It has affinity for free ribosomal 30S subunits but not for 70S ribosomes. This Shewanella denitrificans (strain OS217 / ATCC BAA-1090 / DSM 15013) protein is Ribosome maturation factor RimM.